The primary structure comprises 84 residues: uncharacterized protein (84 aa).

Residues 25–45 (ILMTVAGFIIAFAILVFQISF) form a helical membrane-spanning segment.

The protein resides in the membrane. This is an uncharacterized protein from Bacillus anthracis.